The primary structure comprises 981 residues: MAGKARVHELAKELGVTSKELLATLKEQGEFVKSASSTVEAPVARRLRESFPSAGGAETKSETGAAAPAARPAAKPGAPSPSAAKPGGPRPGPKPAAPAPAAPAAPAPAAPAAPAAAAPAAPSAPVPTPTFNAPKPAQPARPAPAAPAASAPAAPAAPAAPSTGAKPGGPRPGPKAPRVGNNPYSSAPAERPAPRPAPGAPRPGAGQGGSRPAPGQGGPRPAPGQGGPRPAPGQGGPRPAPGQGGPRPPAGQGGPRPSPGSMPPRPNPGAMPARSARPAPGGGGRPGRPGGAPGGRPGGGGGGYRGGGAPGAGAGAGAPGGAAPAGGFRGRPGGGGRPGQRGAAAGAFGRPGGAVRRGRKSKRAKRAEYESMQAPAVGGVRLPRGNGETIRLARGASLSDFADKIDANPAALVQALFNLGEMVTATQSVNDETLELLGGEMNYVVQVVSPEDEDRELLDSFDLTYGEDAGGEEDLESRPPVVTVMGHVDHGKTRLLDVIRKANVREGEAGGITQHIGAYQVLTELEGNERLVTFIDTPGHEAFTAMRARGAKATDLAILVVAADDGVMPQTVEAINHAQAADVPIVVAVNKIDKEGANPDKIRQQLTEYGLVAEEYGGDTMFVDISAKQGLNIDALLEAVLLTADASLDLRANPDMDAQGVAIEAHLDRGRGPVATVLIQRGTLRVGDSIVAGDAYGRVRRMVDEHGQDVHEALPSRPVQVIGFTSVPGAGDNLLVVDEDRIARQIADRRNARKRNALAAKSRKRISLDDLDAALKEHSQLNLILKGDNSGTVEALEEALLGIPIDDEVQLRVIDRGVGGITETNVNLAAASNAIIIGFNVRAEGKATELANREGVDIRYYSVIYQAIDEVEKALKGLLKPVYEEVELGKAEIRAMFRSSKIGNIAGCLVTSGSIRRNAKARLIRDSKVIAETVTISSLKREKEDATEVREGYECGLTVTYSDIKIGDVLECYELREKPRD.

Positions phenylalanine 31–glutamate 370 are disordered. A compositionally biased stretch (low complexity) spans glycine 64 to glycine 87. Positions glycine 88–proline 111 are enriched in pro residues. Residues alanine 112–alanine 121 are compositionally biased toward low complexity. Residues proline 136–alanine 145 show a composition bias toward pro residues. A compositionally biased stretch (low complexity) spans alanine 146–alanine 165. Positions arginine 256 to glycine 269 are enriched in pro residues. The segment covering alanine 270–alanine 279 has biased composition (low complexity). Positions proline 280–glycine 339 are enriched in gly residues. The segment covering arginine 356 to lysine 365 has biased composition (basic residues). The tr-type G domain occupies serine 477–aspartate 649. Residues glycine 486 to threonine 493 are G1. Glycine 486 to threonine 493 provides a ligand contact to GTP. The tract at residues glycine 511 to histidine 515 is G2. A G3 region spans residues aspartate 536 to glycine 539. Residues aspartate 536–histidine 540 and asparagine 590–aspartate 593 each bind GTP. Positions asparagine 590 to aspartate 593 are G4. Positions serine 626–lysine 628 are G5.

This sequence belongs to the TRAFAC class translation factor GTPase superfamily. Classic translation factor GTPase family. IF-2 subfamily.

The protein localises to the cytoplasm. One of the essential components for the initiation of protein synthesis. Protects formylmethionyl-tRNA from spontaneous hydrolysis and promotes its binding to the 30S ribosomal subunits. Also involved in the hydrolysis of GTP during the formation of the 70S ribosomal complex. This is Translation initiation factor IF-2 from Rhodococcus erythropolis (strain PR4 / NBRC 100887).